We begin with the raw amino-acid sequence, 289 residues long: Bis(5'-nucleosyl)-tetraphosphatase, symmetrical (289 aa).

It belongs to the Ap4A hydrolase family.

The catalysed reaction is P(1),P(4)-bis(5'-adenosyl) tetraphosphate + H2O = 2 ADP + 2 H(+). Functionally, hydrolyzes diadenosine 5',5'''-P1,P4-tetraphosphate to yield ADP. The protein is Bis(5'-nucleosyl)-tetraphosphatase, symmetrical of Yersinia pseudotuberculosis serotype IB (strain PB1/+).